The primary structure comprises 89 residues: Small ribosomal subunit protein uS14 (89 aa).

Belongs to the universal ribosomal protein uS14 family. In terms of assembly, part of the 30S ribosomal subunit. Contacts proteins S3 and S10.

Its function is as follows. Binds 16S rRNA, required for the assembly of 30S particles and may also be responsible for determining the conformation of the 16S rRNA at the A site. The chain is Small ribosomal subunit protein uS14 from Onion yellows phytoplasma (strain OY-M).